Reading from the N-terminus, the 544-residue chain is Involucrin (544 aa).

The disordered stretch occupies residues Met1–Leu520. Residues Glu76–His90 show a composition bias toward low complexity. Composition is skewed to basic and acidic residues over residues Glu96–Gln117, Glu124–Leu152, Gln202–Glu234, Gln252–Gly271, Lys283–Gln297, Gln304–Gln347, Gln354–Gln411, Lys423–Gln437, and Lys462–Gln476. Positions Gln477–Leu494 are enriched in low complexity.

Belongs to the involucrin family. As to quaternary structure, directly or indirectly cross-linked to cornifelin (CNFN). Post-translationally, substrate of transglutaminase. Specific glutamines or lysines are cross-linked to keratins, desmoplakin and to inter involucrin molecules. Keratinocytes of epidermis and other stratified squamous epithelia.

The protein resides in the cytoplasm. Its function is as follows. Part of the insoluble cornified cell envelope (CE) of stratified squamous epithelia. The polypeptide is Involucrin (IVL) (Aotus trivirgatus (Three-striped night monkey)).